Reading from the N-terminus, the 305-residue chain is Homoserine O-acetyltransferase (305 aa).

C142 acts as the Acyl-thioester intermediate in catalysis. Residues K163 and S192 each contribute to the substrate site. The active-site Proton acceptor is the H235. Residue E237 is part of the active site. R249 lines the substrate pocket.

Belongs to the MetA family.

It is found in the cytoplasm. The enzyme catalyses L-homoserine + acetyl-CoA = O-acetyl-L-homoserine + CoA. The protein operates within amino-acid biosynthesis; L-methionine biosynthesis via de novo pathway; O-acetyl-L-homoserine from L-homoserine: step 1/1. Transfers an acetyl group from acetyl-CoA to L-homoserine, forming acetyl-L-homoserine. This is Homoserine O-acetyltransferase from Acetivibrio thermocellus (strain ATCC 27405 / DSM 1237 / JCM 9322 / NBRC 103400 / NCIMB 10682 / NRRL B-4536 / VPI 7372) (Clostridium thermocellum).